We begin with the raw amino-acid sequence, 342 residues long: N-acetyl-gamma-glutamyl-phosphate reductase (342 aa).

The active site involves Cys149.

This sequence belongs to the NAGSA dehydrogenase family. Type 1 subfamily.

It localises to the cytoplasm. The catalysed reaction is N-acetyl-L-glutamate 5-semialdehyde + phosphate + NADP(+) = N-acetyl-L-glutamyl 5-phosphate + NADPH + H(+). It functions in the pathway amino-acid biosynthesis; L-arginine biosynthesis; N(2)-acetyl-L-ornithine from L-glutamate: step 3/4. Functionally, catalyzes the NADPH-dependent reduction of N-acetyl-5-glutamyl phosphate to yield N-acetyl-L-glutamate 5-semialdehyde. The protein is N-acetyl-gamma-glutamyl-phosphate reductase of Cereibacter sphaeroides (strain ATCC 17029 / ATH 2.4.9) (Rhodobacter sphaeroides).